The sequence spans 190 residues: Elongation factor P-like protein (190 aa).

Belongs to the elongation factor P family.

The sequence is that of Elongation factor P-like protein from Klebsiella pneumoniae subsp. pneumoniae (strain ATCC 700721 / MGH 78578).